The sequence spans 123 residues: Nitrogenase-stabilizing/protective protein NifW (123 aa).

Belongs to the NifW family. In terms of assembly, homotrimer; associates with NifD.

In terms of biological role, may protect the nitrogenase Fe-Mo protein from oxidative damage. This Rhodopseudomonas palustris (strain HaA2) protein is Nitrogenase-stabilizing/protective protein NifW.